We begin with the raw amino-acid sequence, 709 residues long: Fatty acid oxidation complex subunit alpha (709 aa).

An enoyl-CoA hydratase region spans residues 1–188; the sequence is MEKTFNLTRR…KMGLVNDVVP (188 aa). The tract at residues 308–709 is 3-hydroxyacyl-CoA dehydrogenase; the sequence is RKVKKAVILG…EMAAEKTRFF (402 aa).

This sequence in the N-terminal section; belongs to the enoyl-CoA hydratase/isomerase family. It in the central section; belongs to the 3-hydroxyacyl-CoA dehydrogenase family. As to quaternary structure, heterotetramer of two alpha chains (FadJ) and two beta chains (FadI).

It localises to the cytoplasm. The enzyme catalyses a (3S)-3-hydroxyacyl-CoA = a (2E)-enoyl-CoA + H2O. It catalyses the reaction a 4-saturated-(3S)-3-hydroxyacyl-CoA = a (3E)-enoyl-CoA + H2O. The catalysed reaction is a (3S)-3-hydroxyacyl-CoA + NAD(+) = a 3-oxoacyl-CoA + NADH + H(+). It carries out the reaction (3S)-3-hydroxybutanoyl-CoA = (3R)-3-hydroxybutanoyl-CoA. Its pathway is lipid metabolism; fatty acid beta-oxidation. Catalyzes the formation of a hydroxyacyl-CoA by addition of water on enoyl-CoA. Also exhibits 3-hydroxyacyl-CoA epimerase and 3-hydroxyacyl-CoA dehydrogenase activities. This is Fatty acid oxidation complex subunit alpha from Shewanella sp. (strain MR-7).